A 735-amino-acid polypeptide reads, in one-letter code: MSKMRVYEYAKKHNVPSKDVIHKLKEMNIEVNNHMTMLEADVVEKLDHQYRVNSEKKAEKKTEKPKRPTPAKAADFADEEMFEDKKETAKAKPAKKKGAVKGKETKKTEAQQQEKKLFQAAKKKGKGPMKGKKQAAPASKQAQQPAKKEKELPKKITFEGSLTVAELAKKLGREPSEIIKKLFMLGVMATINQDLDKDAIELICSDYGVEVEEKVTIDETNFETIEIVDAPEDLVERPPVVTIMGHVDHGKTTLLDAIRHSKVTEQEAGGITQHIGAYQVTVNGKKITFLDTPGHEAFTTMRARGAQVTDIVILVVAADDGVMPQTVEAINHAKAANVPIIVAINKMDKPEANPDRVMQELMEYNLVPEEWGGDTIFCKLSAKTQDGIDHLLEMILLVSEMEELKANPNRRALGTVIEAKLDKGRGPVATLLVQAGTLKVGDPIVVGTTYGRVRAMVNDSGRRVKEAGPSMPVEITGLHDVPQAGDRFMVFEDEKKARQIGEARAQRQLQEQRSVKTRVSLDDLFEQIKQGEMKELNLIVKADVQGSVEALVAALQKIDIEGVRVKIIHAAVGAITESDILLATTSNAIVIGFNVRPDTNAKRAAESENVDIRLHRIIYNVIEEIEAAMKGMLDPEYEEKVIGQAEVRQTFKVSKVGTIAGCYVTDGKITRDSKVRLIRQGIVVYEGEIDSLKRYKDDVREVAQGYECGVTIKNFNDIKEGDVIEAYIMQEVARA.

2 stretches are compositionally biased toward basic and acidic residues: residues 52 to 66 and 101 to 117; these read VNSEKKAEKKTEKPK and KGKETKKTEAQQQEKKL. The tract at residues 52–154 is disordered; that stretch reads VNSEKKAEKK…PAKKEKELPK (103 aa). A compositionally biased stretch (basic residues) spans 121-133; sequence AKKKGKGPMKGKK. The segment covering 134-145 has biased composition (low complexity); sequence QAAPASKQAQQP. The tr-type G domain maps to 236 to 405; sequence ERPPVVTIMG…LLVSEMEELK (170 aa). The G1 stretch occupies residues 245–252; sequence GHVDHGKT. 245–252 lines the GTP pocket; sequence GHVDHGKT. Residues 270-274 are G2; that stretch reads GITQH. Residues 291–294 are G3; that stretch reads DTPG. Residues 291–295 and 345–348 contribute to the GTP site; these read DTPGH and NKMD. Positions 345 to 348 are G4; that stretch reads NKMD. Residues 381–383 form a G5 region; the sequence is SAK.

It belongs to the TRAFAC class translation factor GTPase superfamily. Classic translation factor GTPase family. IF-2 subfamily.

It is found in the cytoplasm. Functionally, one of the essential components for the initiation of protein synthesis. Protects formylmethionyl-tRNA from spontaneous hydrolysis and promotes its binding to the 30S ribosomal subunits. Also involved in the hydrolysis of GTP during the formation of the 70S ribosomal complex. This chain is Translation initiation factor IF-2, found in Geobacillus thermodenitrificans (strain NG80-2).